A 364-amino-acid chain; its full sequence is MNNKTRKVLVPLIAIVFGFLLGAIIMLAFGYNPIWGYEDLFISALGSARSIGETLQTMGPLILTALSFAVAMKVGLFNIGMSGQALAGWISSMWFALSFPDIPRLLMIPLVVIIGMVFGAFMGFIPGILRALLGTSEVITTIMLNYIMLFFSTFMIHSMFQKNILMDNTTDQTKLISANASFRTNWMSSLTDNSTLNIGLIIAIIALVIMAIIFTKTTLGFEIKAVGLNPDASEYAGISAKRTLILSMVVAGALAGLGGVVYGFGYMQNFVSQSASLDIGFYGMAVALLGGNSPIGILFAALLFSVLQTGAPGMTNDGIPPEIVKVVTAAIIFFIAVKFIIEVMLPKAKAIKASEATKKKGEKA.

8 helical membrane passes run 9-29 (LVPLIAIVFGFLLGAIIMLAF), 77-99 (FNIGMSGQALAGWISSMWFALSF), 105-125 (LLMIPLVVIIGMVFGAFMGFI), 138-158 (VITTIMLNYIMLFFSTFMIHS), 195-215 (TLNIGLIIAIIALVIMAIIFT), 244-264 (LILSMVVAGALAGLGGVVYGF), 284-304 (MAVALLGGNSPIGILFAALLF), and 326-346 (VVTAAIIFFIAVKFIIEVMLP).

Belongs to the binding-protein-dependent transport system permease family. As to quaternary structure, the complex is composed of two ATP-binding proteins (NupA), two transmembrane proteins (NupB and NupC) and a solute-binding protein (BmpA).

It localises to the cell membrane. In terms of biological role, part of an ABC transporter complex involved in the uptake of all common nucleosides. Responsible for the translocation of the substrate across the membrane. In Lactococcus lactis subsp. cremoris (strain MG1363), this protein is Nucleoside ABC transporter permease protein NupB.